The following is a 107-amino-acid chain: Frataxin (107 aa).

The protein belongs to the frataxin family. As to quaternary structure, monomer.

The protein resides in the cytoplasm. In terms of biological role, promotes the assembly and repair of iron-sulfur clusters by delivering Fe(2+) to proteins involved in these pathways. This chain is Frataxin (YFH1), found in Trachipleistophora hominis (Microsporidian parasite).